A 391-amino-acid chain; its full sequence is Phosphoglycerate kinase (391 aa).

Residues 21 to 23 (DLN), R36, 59 to 62 (HLGR), R113, and R146 contribute to the substrate site. ATP-binding positions include K197, E319, and 345–348 (GGDT).

Belongs to the phosphoglycerate kinase family. In terms of assembly, monomer.

It is found in the cytoplasm. It carries out the reaction (2R)-3-phosphoglycerate + ATP = (2R)-3-phospho-glyceroyl phosphate + ADP. It functions in the pathway carbohydrate degradation; glycolysis; pyruvate from D-glyceraldehyde 3-phosphate: step 2/5. This Shewanella sp. (strain MR-4) protein is Phosphoglycerate kinase.